The chain runs to 94 residues: Integration host factor subunit beta (94 aa).

Belongs to the bacterial histone-like protein family. In terms of assembly, heterodimer of an alpha and a beta chain.

Functionally, this protein is one of the two subunits of integration host factor, a specific DNA-binding protein that functions in genetic recombination as well as in transcriptional and translational control. The protein is Integration host factor subunit beta of Serratia proteamaculans (strain 568).